A 178-amino-acid chain; its full sequence is Large ribosomal subunit protein uL16 (178 aa).

This sequence belongs to the universal ribosomal protein uL16 family.

The sequence is that of Large ribosomal subunit protein uL16 from Saccharolobus solfataricus (strain ATCC 35092 / DSM 1617 / JCM 11322 / P2) (Sulfolobus solfataricus).